A 2412-amino-acid chain; its full sequence is Centrosomal protein of 295 kDa (2412 aa).

Positions 1-540 (MKRKGMNTKL…KQADQPEVCC (540 aa)) are necessary for centriole targeting and microtubule association. Serine 13 bears the Phosphoserine mark. Coiled-coil stretches lie at residues 63-84 (AEEL…LEKL), 114-134 (AERK…QKNQ), 209-273 (DAHL…DLAR), 489-535 (RRKQ…QADQ), and 563-592 (HQLL…VLKE). 2 disordered regions span residues 600-641 (SALV…YQPV) and 739-762 (LDSQ…PSPF). Residue serine 634 is modified to Phosphoserine. The span at 739–757 (LDSQQISSEDSENISSKPS) shows a compositional bias: polar residues. The stretch at 811-841 (AQQGDLRFLQEQLELQKKVLQARQEAREKLL) forms a coiled coil. Disordered stretches follow at residues 871-891 (SASA…ATVS), 973-1005 (DTQS…QDGS), 1158-1178 (LSSP…SVRS), and 1216-1240 (WVDT…QQTG). Composition is skewed to polar residues over residues 993–1005 (PSQS…QDGS), 1158–1176 (LSSP…SVSV), and 1224–1240 (FQSS…QQTG). Coiled-coil stretches lie at residues 1300-1327 (QQDS…EAHE) and 1448-1493 (QHDD…SKQI). Serine 1573 bears the Phosphoserine mark. Disordered regions lie at residues 1820 to 1895 (LAHD…LSSV), 1916 to 1937 (ESFS…EETD), 2028 to 2048 (DLSS…SESS), and 2089 to 2111 (TEGS…SQHA). The span at 1836 to 1868 (SKSHDDNAEAVKVKKSDVEDHAVLSHAVSKEEA) shows a compositional bias: basic and acidic residues. Over residues 1885-1895 (QEISQEPLSSV) the composition is skewed to polar residues. The span at 1921–1935 (QTEHLEQESTNKQEE) shows a compositional bias: basic and acidic residues. Residues 2089–2108 (TEGSEQSFQQLRPEFSSQES) are compositionally biased toward polar residues. The interval 2367 to 2412 (SLQEAFMTRQTLTERSYQRQREIWNKTRLPQTKVSKEKLPTGCTGS) is ALMS motif.

Interacts (via ALMS motif) with microtubules; this interaction is direct.

The protein localises to the cytoplasm. The protein resides in the cytoskeleton. It is found in the microtubule organizing center. It localises to the centrosome. Its subcellular location is the centriole. The protein localises to the spindle. Functionally, centriole-enriched microtubule-binding protein involved in centriole biogenesis. Essential for the generation of the distal portion of new-born centrioles in a CPAP- and CEP120-mediated elongation dependent manner during the cell cycle S/G2 phase after formation of the initiating cartwheel structure. Required for the recruitment of centriolar proteins, such as POC1B, POC5 and CEP135, into the distal portion of centrioles. Also required for centriole-to-centrosome conversion during mitotic progression, but is dispensable for cartwheel removal or centriole disengagement. Binds to and stabilizes centriolar microtubule. May be involved in ciliogenesis. The protein is Centrosomal protein of 295 kDa of Mus musculus (Mouse).